The chain runs to 572 residues: mRNA cap guanine-N(7) methyltransferase (572 aa).

Disordered regions lie at residues 1–75 (MPED…GSRV) and 110–140 (EKAI…FPSS). Basic and acidic residues-rich tracts occupy residues 24-39 (ANDG…RVHD) and 59-69 (SADENKDKKYD). A compositionally biased stretch (low complexity) spans 123–140 (TTTTPSSTTSSSSSFPSS). In terms of domain architecture, mRNA cap 0 methyltransferase spans 262–571 (SPIYKLRNFN…FYVAFVFEKV (310 aa)). An mRNA-binding site is contributed by 271–272 (NN). The S-adenosyl-L-methionine site is built by lysine 275, cysteine 302, aspartate 324, aspartate 366, glutamine 396, and tyrosine 401.

The protein belongs to the class I-like SAM-binding methyltransferase superfamily. mRNA cap 0 methyltransferase family.

The protein resides in the nucleus. The catalysed reaction is a 5'-end (5'-triphosphoguanosine)-ribonucleoside in mRNA + S-adenosyl-L-methionine = a 5'-end (N(7)-methyl 5'-triphosphoguanosine)-ribonucleoside in mRNA + S-adenosyl-L-homocysteine. Functionally, responsible for methylating the 5'-cap structure of mRNAs. This chain is mRNA cap guanine-N(7) methyltransferase (ABD1), found in Lodderomyces elongisporus (strain ATCC 11503 / CBS 2605 / JCM 1781 / NBRC 1676 / NRRL YB-4239) (Yeast).